Consider the following 209-residue polypeptide: MPQVAKYDTTGNRVGDIDLADNVFNEEVNEHVVHQVVTAQLATMRRGTASTKTRGEVSGGGRKPWRQKGTGRARHGSIRSPLWVGGGIVFGPRPRKHIKKVPKKVKKLALRSILSYKSQNEELIILDELKFDTPKTKQVVELLSNLNLEGKKVLIILPDKDANIYLSARNIPGVKTLVVDALNAFDLLNNDCIVMSEEAVKRVEEVLAR.

Positions 46–76 (RGTASTKTRGEVSGGGRKPWRQKGTGRARHG) are disordered. Over residues 63-76 (KPWRQKGTGRARHG) the composition is skewed to basic residues.

It belongs to the universal ribosomal protein uL4 family. As to quaternary structure, part of the 50S ribosomal subunit.

In terms of biological role, one of the primary rRNA binding proteins, this protein initially binds near the 5'-end of the 23S rRNA. It is important during the early stages of 50S assembly. It makes multiple contacts with different domains of the 23S rRNA in the assembled 50S subunit and ribosome. Functionally, forms part of the polypeptide exit tunnel. This chain is Large ribosomal subunit protein uL4, found in Halothermothrix orenii (strain H 168 / OCM 544 / DSM 9562).